A 709-amino-acid polypeptide reads, in one-letter code: Frizzled-6 (709 aa).

The first 18 residues, 1–18 (MERSPFLLACILLPLVRG), serve as a signal peptide directing secretion. The FZ domain occupies 19 to 132 (HSLFTCEPIT…CNRLPHCDDT (114 aa)). At 19–201 (HSLFTCEPIT…SDELDFAKSF (183 aa)) the chain is on the extracellular side. 5 disulfide bridges follow: Cys-24-Cys-85, Cys-32-Cys-78, Cys-69-Cys-106, Cys-95-Cys-129, and Cys-99-Cys-123. Residue Asn-38 is glycosylated (N-linked (GlcNAc...) asparagine). A helical transmembrane segment spans residues 202–222 (IGIVSIFCLCATLFTFLTFLI). Residues 223-233 (DVRRFRYPERP) lie on the Cytoplasmic side of the membrane. A helical membrane pass occupies residues 234-254 (IIYYSVCYSIVSLMYFVGFLL). Topologically, residues 255–284 (GNSTACNKADEKLELGDTVVLGSKNKACSV) are extracellular. Asn-256 is a glycosylation site (N-linked (GlcNAc...) asparagine). A helical membrane pass occupies residues 285-305 (VFMFLYFFTMAGTVWWVILTI). Residues 306–324 (TWFLAAGRKWSCEAIEQKA) lie on the Cytoplasmic side of the membrane. Residues 325–345 (VWFHAVAWGAPGFLTVMLLAM) form a helical membrane-spanning segment. Topologically, residues 346 to 370 (NKVEGDNISGVCFVGLYDLDASRYF) are extracellular. N-linked (GlcNAc...) asparagine glycosylation occurs at Asn-352. Residues 371–391 (VLLPLCLCVFVGLSLLLAGII) traverse the membrane as a helical segment. The Cytoplasmic segment spans residues 392–416 (SLNHVRQVIQHDGRNQEKLKKFMIR). Residues 417-437 (IGVFSGLYLVPLVTLLGCYVY) form a helical membrane-spanning segment. The Extracellular portion of the chain corresponds to 438–473 (ELVNRITWEMTWFSDHCHQYRIPCPYQANPKARPEL). Residues 474–494 (ALFMIKYLMTLIVGISAVFWV) form a helical membrane-spanning segment. The Cytoplasmic portion of the chain corresponds to 495-709 (GSKKTCTEWA…EQGAGSHSDA (215 aa)). Positions 498-503 (KTCTEW) match the Lys-Thr-X-X-X-Trp motif, mediates interaction with the PDZ domain of Dvl family members motif. Polar residues predominate over residues 583 to 594 (QETSTEVHTSPE). Residues 583–709 (QETSTEVHTS…EQGAGSHSDA (127 aa)) are disordered. Residues 596-616 (SVKEGRADRANTPSAKDRDCG) are compositionally biased toward basic and acidic residues. A compositionally biased stretch (polar residues) spans 620 to 629 (GPSSKLSGNR). Basic and acidic residues predominate over residues 630-644 (NGRESRAGGLKERSN). At Ser-656 the chain carries Phosphoserine. Residues 669-690 (CSTSQAASSPEPTSLKGSTSLP) are compositionally biased toward polar residues. Basic and acidic residues predominate over residues 697 to 709 (ARKEQGAGSHSDA).

Belongs to the G-protein coupled receptor Fz/Smo family. Interacts with LMBR1L. In terms of processing, ubiquitinated by ZNRF3, leading to its degradation by the proteasome. Expressed in both hair cells and supporting cells in the utricle, saccule, cristae and the organ of Corti in the inner ear (at protein level).

Its subcellular location is the membrane. It localises to the cell membrane. The protein resides in the cell surface. It is found in the apical cell membrane. The protein localises to the cytoplasmic vesicle membrane. Its subcellular location is the endoplasmic reticulum membrane. In terms of biological role, receptor for Wnt proteins. Most of frizzled receptors are coupled to the beta-catenin canonical signaling pathway, which leads to the activation of disheveled proteins, inhibition of GSK-3 kinase, nuclear accumulation of beta-catenin and activation of Wnt target genes. A second signaling pathway involving PKC and calcium fluxes has been seen for some family members, but it is not yet clear if it represents a distinct pathway or if it can be integrated in the canonical pathway, as PKC seems to be required for Wnt-mediated inactivation of GSK-3 kinase. Both pathways seem to involve interactions with G-proteins. Activation by Wnt5A stimulates PKC activity via a G-protein-dependent mechanism. Involved in transduction and intercellular transmission of polarity information during tissue morphogenesis and/or in differentiated tissues. Together with FZD3, is involved in the neural tube closure and plays a role in the regulation of the establishment of planar cell polarity (PCP), particularly in the orientation of asymmetric bundles of stereocilia on the apical faces of a subset of auditory and vestibular sensory cells located in the inner ear. This Mus musculus (Mouse) protein is Frizzled-6 (Fzd6).